Here is a 143-residue protein sequence, read N- to C-terminus: UPF0306 protein plu4501 (143 aa).

It belongs to the UPF0306 family.

This chain is UPF0306 protein plu4501, found in Photorhabdus laumondii subsp. laumondii (strain DSM 15139 / CIP 105565 / TT01) (Photorhabdus luminescens subsp. laumondii).